The chain runs to 131 residues: Protein NEGATIVE REGULATOR OF RESISTANCE (131 aa).

Disordered regions lie at residues 1–33 (MDATTTDATTAKRKRPAASDIADDAPTTVDEVS) and 51–131 (TRRL…RAPA). The short motif at 12 to 15 (KRKR) is the Nuclear localization signal element. Positions 116-131 (PPSDAPATPRSARAPA) are enriched in low complexity.

Belongs to the NPR1-interactor family. As to quaternary structure, interacts with NPR1/NH1. Interacts with NPR2/NH2.

It localises to the nucleus. Acts as a negative regulator of disease resistance. Acts on basal resistance, age-related resistance and resistance mediated by the LRR receptor kinase XA21. Plants over-expressing NRR display enhanced susceptibility to the bacterial blight Xanthomonas oryzae pv. oryzae (Xoo). The protein is Protein NEGATIVE REGULATOR OF RESISTANCE of Oryza sativa subsp. indica (Rice).